The primary structure comprises 878 residues: Protein translocase subunit SecA (878 aa).

ATP contacts are provided by residues glutamine 79, 97 to 101, and aspartate 487; that span reads GEGKT.

This sequence belongs to the SecA family.

It localises to the plastid. Its subcellular location is the chloroplast stroma. The protein localises to the chloroplast thylakoid membrane. It catalyses the reaction ATP + H2O + cellular proteinSide 1 = ADP + phosphate + cellular proteinSide 2.. Functionally, has a central role in coupling the hydrolysis of ATP to the transfer of proteins across the thylakoid membrane. In Antithamnion sp. (Red alga), this protein is Protein translocase subunit SecA.